Here is a 225-residue protein sequence, read N- to C-terminus: Large ribosomal subunit protein mL58 (225 aa).

The segment at Pro106–Lys138 is disordered. The segment covering Pro109–Asp119 has biased composition (polar residues).

Belongs to the mitochondrion-specific ribosomal protein mL58 family. Component of the mitochondrial large ribosomal subunit (mt-LSU). Mature N.crassa 74S mitochondrial ribosomes consist of a small (37S) and a large (54S) subunit. The 37S small subunit contains a 16S ribosomal RNA (16S mt-rRNA) and 32 different proteins. The 54S large subunit contains a 23S rRNA (23S mt-rRNA) and 42 different proteins.

The protein localises to the mitochondrion. Component of the mitochondrial ribosome (mitoribosome), a dedicated translation machinery responsible for the synthesis of mitochondrial genome-encoded proteins, including at least some of the essential transmembrane subunits of the mitochondrial respiratory chain. The mitoribosomes are attached to the mitochondrial inner membrane and translation products are cotranslationally integrated into the membrane. The chain is Large ribosomal subunit protein mL58 (mrpl20) from Neurospora crassa (strain ATCC 24698 / 74-OR23-1A / CBS 708.71 / DSM 1257 / FGSC 987).